We begin with the raw amino-acid sequence, 101 residues long: MAKTSAVEKNKRRRTTVANQAAKRAGLKAIIMNQALPIEERFKASIKLASLPRDGSKTRIRNRCEVSGRPRAYYRKLRMSRIALRELGNLGKVPGIVKSSW.

Belongs to the universal ribosomal protein uS14 family. Part of the 30S ribosomal subunit. Contacts proteins S3 and S10.

Binds 16S rRNA, required for the assembly of 30S particles and may also be responsible for determining the conformation of the 16S rRNA at the A site. This chain is Small ribosomal subunit protein uS14, found in Rhizobium johnstonii (strain DSM 114642 / LMG 32736 / 3841) (Rhizobium leguminosarum bv. viciae).